The sequence spans 346 residues: Selenide, water dikinase (346 aa).

Sec16 is a catalytic residue. Residue Sec16 is a non-standard amino acid, selenocysteine. ATP contacts are provided by residues Lys19 and 47–49; that span reads TAD. Asp50 lines the Mg(2+) pocket. Residues Asp67, Asp90, and 138–140 each bind ATP; that span reads GHS. Asp90 is a binding site for Mg(2+). Asp226 contacts Mg(2+).

It belongs to the selenophosphate synthase 1 family. Class I subfamily. As to quaternary structure, homodimer. It depends on Mg(2+) as a cofactor.

It carries out the reaction hydrogenselenide + ATP + H2O = selenophosphate + AMP + phosphate + 2 H(+). Functionally, synthesizes selenophosphate from selenide and ATP. This chain is Selenide, water dikinase, found in Haemophilus ducreyi (strain 35000HP / ATCC 700724).